The following is a 576-amino-acid chain: Putative export ATP-binding/permease protein RP696 (576 aa).

One can recognise an ABC transmembrane type-1 domain in the interval 20-303; the sequence is LIIVMISLLS…IFELLSEMHL (284 aa). A run of 6 helical transmembrane segments spans residues 21 to 41, 61 to 81, 135 to 155, 158 to 178, 242 to 262, and 277 to 297; these read IIVMISLLSVSASLLLIGSIF, ILYICLLIVILSVASFFRSYF, FLSFFIRNSVMLIGSITLMFF, FKLASIVIITIPILLVPLIKF, ALFFAISIAVIFLTITLIVWI, and IISFIYYAIIAGVSSGGIFEL. Residues 336-572 enclose the ABC transporter domain; it reads IEFKNVDFTY…SEIYRNICRE (237 aa). Residue 371–378 coordinates ATP; it reads GRSGAGKS.

This sequence belongs to the ABC transporter superfamily. In terms of assembly, homodimer.

Its subcellular location is the cell inner membrane. In terms of biological role, part of an ABC transporter complex. Transmembrane domains (TMD) form a pore in the inner membrane and the ATP-binding domain (NBD) is responsible for energy generation. The protein is Putative export ATP-binding/permease protein RP696 of Rickettsia prowazekii (strain Madrid E).